A 249-amino-acid polypeptide reads, in one-letter code: Triosephosphate isomerase (249 aa).

Residue 9-11 (NWK) participates in substrate binding. The active-site Electrophile is the histidine 95. Glutamate 167 serves as the catalytic Proton acceptor. Residues glycine 173, serine 213, and 234–235 (GG) each bind substrate.

This sequence belongs to the triosephosphate isomerase family. As to quaternary structure, homodimer.

Its subcellular location is the cytoplasm. It catalyses the reaction D-glyceraldehyde 3-phosphate = dihydroxyacetone phosphate. It participates in carbohydrate biosynthesis; gluconeogenesis. It functions in the pathway carbohydrate degradation; glycolysis; D-glyceraldehyde 3-phosphate from glycerone phosphate: step 1/1. In terms of biological role, involved in the gluconeogenesis. Catalyzes stereospecifically the conversion of dihydroxyacetone phosphate (DHAP) to D-glyceraldehyde-3-phosphate (G3P). The sequence is that of Triosephosphate isomerase from Dictyoglomus turgidum (strain DSM 6724 / Z-1310).